The following is an 86-amino-acid chain: MTRFVLFLSCFFLIGMVVECKDGYLMGPDGCKLDCLMRKGTFCAETCSLRKGKDGYCYAWLACYCYNMPDWVKTWERATNTCGKGK.

The N-terminal stretch at 1–20 (MTRFVLFLSCFFLIGMVVEC) is a signal peptide. In terms of domain architecture, LCN-type CS-alpha/beta spans 21–83 (KDGYLMGPDG…TWERATNTCG (63 aa)). Disulfide bonds link Cys-31-Cys-82, Cys-35-Cys-57, Cys-43-Cys-63, and Cys-47-Cys-65. Position 84 is a lysine amide (Lys-84).

It belongs to the long (4 C-C) scorpion toxin superfamily. Sodium channel inhibitor family. Beta subfamily. Expressed by the venom gland.

Its subcellular location is the secreted. Functionally, beta toxins bind voltage-independently at site-4 of sodium channels (Nav) and shift the voltage of activation toward more negative potentials thereby affecting sodium channel activation and promoting spontaneous and repetitive firing. This is Toxin TdNa7 from Tityus discrepans (Venezuelan scorpion).